A 463-amino-acid polypeptide reads, in one-letter code: Lipase 5 (463 aa).

The first 14 residues, 1–14, serve as a signal peptide directing secretion; sequence MLYLILFLIAPIYA. Cys110 and Cys281 are oxidised to a cystine. Residue Ser194 is the Charge relay system of the active site. N-linked (GlcNAc...) asparagine glycosylation occurs at Asn229. Active-site charge relay system residues include Asp343 and His376. Cys359 and Cys404 are disulfide-bonded.

The protein belongs to the AB hydrolase superfamily. Lipase family. Class Lip subfamily.

It is found in the secreted. The enzyme catalyses a triacylglycerol + H2O = a diacylglycerol + a fatty acid + H(+). Its activity is regulated as follows. Fe(2)+, Fe(3+), Hg(2+) as well as ethylenediaminetetraacetic acid (EDTA) and phenylmethanesulfonyl fluoride (PMSF) strongly inhibit the lipase activity. Surfactants such as Tween 20, Tween 80 and TritonX-100 show also inhibitory effect in the lipase activity. Sodium dodecyl sulfate (SDS) sharply decreases the lipase activity by 85%. Methanol, ethanol, and acetone have also negative effect on the lipase activity, with residual activities at 48%, 24% and 44% respectively. Finally, lipase activity is almost lost in the presence of isopropanol alcohol. Its function is as follows. Secreted lipase that is able to hydrolyze both the neutral triacylglycerols and the monopalmitate ester Tween 40, allowing the use of hydrolyzed products as carbon sources. Exhibits a preference for the short and medium chain length p-NP (C4 and C8 acyl group) esters rather than the long chain length p-NP esters (C12, C16 and C18 acyl group). Has broad lipolytic activity, which may be important for colonization and subsequent infection, therefore contributing to the persistence and virulence in human tissue. This chain is Lipase 5, found in Candida albicans (strain SC5314 / ATCC MYA-2876) (Yeast).